Reading from the N-terminus, the 262-residue chain is Cytochrome c oxidase subunit 3 (262 aa).

The next 6 membrane-spanning stretches (helical) occupy residues 39–59 (YDIS…YQWW), 83–103 (GMIL…WAFF), 120–140 (MGII…ILLA), 163–183 (GLFF…YEYI), 198–218 (FFMA…FLLV), and 240–260 (AWYW…IYWW).

It belongs to the cytochrome c oxidase subunit 3 family. Component of the cytochrome c oxidase (complex IV, CIV), a multisubunit enzyme composed of a catalytic core of 3 subunits and several supernumerary subunits. The complex exists as a monomer or a dimer and forms supercomplexes (SCs) in the inner mitochondrial membrane with ubiquinol-cytochrome c oxidoreductase (cytochrome b-c1 complex, complex III, CIII).

It is found in the mitochondrion inner membrane. It catalyses the reaction 4 Fe(II)-[cytochrome c] + O2 + 8 H(+)(in) = 4 Fe(III)-[cytochrome c] + 2 H2O + 4 H(+)(out). Its function is as follows. Component of the cytochrome c oxidase, the last enzyme in the mitochondrial electron transport chain which drives oxidative phosphorylation. The respiratory chain contains 3 multisubunit complexes succinate dehydrogenase (complex II, CII), ubiquinol-cytochrome c oxidoreductase (cytochrome b-c1 complex, complex III, CIII) and cytochrome c oxidase (complex IV, CIV), that cooperate to transfer electrons derived from NADH and succinate to molecular oxygen, creating an electrochemical gradient over the inner membrane that drives transmembrane transport and the ATP synthase. Cytochrome c oxidase is the component of the respiratory chain that catalyzes the reduction of oxygen to water. Electrons originating from reduced cytochrome c in the intermembrane space (IMS) are transferred via the dinuclear copper A center (CU(A)) of subunit 2 and heme A of subunit 1 to the active site in subunit 1, a binuclear center (BNC) formed by heme A3 and copper B (CU(B)). The BNC reduces molecular oxygen to 2 water molecules using 4 electrons from cytochrome c in the IMS and 4 protons from the mitochondrial matrix. The protein is Cytochrome c oxidase subunit 3 (mt:CoIII) of Drosophila melanogaster (Fruit fly).